The following is a 724-amino-acid chain: Catalase-peroxidase (724 aa).

The segment at residues 96 to 225 (WHAAGTYRVA…LAAVMMGLIY (130 aa)) is a cross-link (tryptophyl-tyrosyl-methioninium (Trp-Tyr) (with M-251)). The active-site Proton acceptor is the His-97. Residues 225-251 (YVNPEGVDGNPDPLRTAEDVRITFERM) constitute a cross-link (tryptophyl-tyrosyl-methioninium (Tyr-Met) (with W-96)). His-266 lines the heme b pocket.

The protein belongs to the peroxidase family. Peroxidase/catalase subfamily. Homodimer or homotetramer. The cofactor is heme b. In terms of processing, formation of the three residue Trp-Tyr-Met cross-link is important for the catalase, but not the peroxidase activity of the enzyme.

It catalyses the reaction H2O2 + AH2 = A + 2 H2O. The enzyme catalyses 2 H2O2 = O2 + 2 H2O. Its function is as follows. Bifunctional enzyme with both catalase and broad-spectrum peroxidase activity. This chain is Catalase-peroxidase, found in Halorhodospira halophila (strain DSM 244 / SL1) (Ectothiorhodospira halophila (strain DSM 244 / SL1)).